We begin with the raw amino-acid sequence, 160 residues long: Transcription elongation factor GreA (160 aa).

The protein belongs to the GreA/GreB family.

Necessary for efficient RNA polymerase transcription elongation past template-encoded arresting sites. The arresting sites in DNA have the property of trapping a certain fraction of elongating RNA polymerases that pass through, resulting in locked ternary complexes. Cleavage of the nascent transcript by cleavage factors such as GreA or GreB allows the resumption of elongation from the new 3'terminus. GreA releases sequences of 2 to 3 nucleotides. The chain is Transcription elongation factor GreA from Francisella philomiragia subsp. philomiragia (strain ATCC 25017 / CCUG 19701 / FSC 153 / O#319-036).